The primary structure comprises 257 residues: Thiazole synthase (257 aa).

Lys-98 (schiff-base intermediate with DXP) is an active-site residue. Residues Gly-159, 185–186, and 207–208 contribute to the 1-deoxy-D-xylulose 5-phosphate site; these read AG and NT.

Belongs to the ThiG family. As to quaternary structure, homotetramer. Forms heterodimers with either ThiH or ThiS.

Its subcellular location is the cytoplasm. The enzyme catalyses [ThiS sulfur-carrier protein]-C-terminal-Gly-aminoethanethioate + 2-iminoacetate + 1-deoxy-D-xylulose 5-phosphate = [ThiS sulfur-carrier protein]-C-terminal Gly-Gly + 2-[(2R,5Z)-2-carboxy-4-methylthiazol-5(2H)-ylidene]ethyl phosphate + 2 H2O + H(+). Its pathway is cofactor biosynthesis; thiamine diphosphate biosynthesis. In terms of biological role, catalyzes the rearrangement of 1-deoxy-D-xylulose 5-phosphate (DXP) to produce the thiazole phosphate moiety of thiamine. Sulfur is provided by the thiocarboxylate moiety of the carrier protein ThiS. In vitro, sulfur can be provided by H(2)S. This Anaeromyxobacter dehalogenans (strain 2CP-C) protein is Thiazole synthase.